The following is a 93-amino-acid chain: DNA-binding protein HU 1 (93 aa).

It belongs to the bacterial histone-like protein family. In terms of assembly, homodimer.

The protein resides in the cytoplasm. Its subcellular location is the nucleoid. Its function is as follows. Histone-like DNA-binding protein which is capable of wrapping DNA to stabilize it, and thus to prevent its denaturation under extreme environmental conditions. This chain is DNA-binding protein HU 1 (hup1), found in Streptomyces coelicolor (strain ATCC BAA-471 / A3(2) / M145).